A 261-amino-acid polypeptide reads, in one-letter code: Hydrolase in agr operon (261 aa).

Residues 1-239 (MKVQIYQLPI…ADILTVDLNL (239 aa)) enclose the CN hydrolase domain. E41 serves as the catalytic Proton acceptor. K110 acts as the Proton donor in catalysis. Residue C146 is the Nucleophile of the active site.

It belongs to the carbon-nitrogen hydrolase superfamily. NIT1/NIT2 family.

This chain is Hydrolase in agr operon, found in Staphylococcus aureus.